Consider the following 231-residue polypeptide: MNNFFQGYNLLFQHSLFASYMDWFHAFNCSLLLGVLVFVTLLFGYLIFSTFYFKSKKIEYQFGELLCSIFPTIILLMQMVPSLSLLYYYGLMNLDSNLTVKVTGHQWYWSYEYSDIPGLEFDSYMKSLDQLNLGEPRLLEVDNRCVIPCDTNIRFCITSADVIHAWALNSLSVKLDAMSGILSTFSYSFPMVGVFYGQCSEICGANHSFMPIALEVTLLDNFKSWCFGTME.

The Mitochondrial intermembrane portion of the chain corresponds to 1-30 (MNNFFQGYNLLFQHSLFASYMDWFHAFNCS). The helical transmembrane segment at 31–51 (LLLGVLVFVTLLFGYLIFSTF) threads the bilayer. Topologically, residues 52–64 (YFKSKKIEYQFGE) are mitochondrial matrix. Residues 65–85 (LLCSIFPTIILLMQMVPSLSL) form a helical membrane-spanning segment. The Mitochondrial intermembrane portion of the chain corresponds to 86 to 231 (LYYYGLMNLD…FKSWCFGTME (146 aa)). Residues His164, Cys199, Glu201, Cys203, His207, and Met210 each contribute to the Cu cation site. A Mg(2+)-binding site is contributed by Glu201.

Belongs to the cytochrome c oxidase subunit 2 family. Component of the cytochrome c oxidase (complex IV, CIV), a multisubunit enzyme composed of a catalytic core of 3 subunits and several supernumerary subunits. The complex exists as a monomer or a dimer and forms supercomplexes (SCs) in the inner mitochondrial membrane with ubiquinol-cytochrome c oxidoreductase (cytochrome b-c1 complex, complex III, CIII). Requires Cu cation as cofactor.

The protein resides in the mitochondrion inner membrane. It carries out the reaction 4 Fe(II)-[cytochrome c] + O2 + 8 H(+)(in) = 4 Fe(III)-[cytochrome c] + 2 H2O + 4 H(+)(out). Component of the cytochrome c oxidase, the last enzyme in the mitochondrial electron transport chain which drives oxidative phosphorylation. The respiratory chain contains 3 multisubunit complexes succinate dehydrogenase (complex II, CII), ubiquinol-cytochrome c oxidoreductase (cytochrome b-c1 complex, complex III, CIII) and cytochrome c oxidase (complex IV, CIV), that cooperate to transfer electrons derived from NADH and succinate to molecular oxygen, creating an electrochemical gradient over the inner membrane that drives transmembrane transport and the ATP synthase. Cytochrome c oxidase is the component of the respiratory chain that catalyzes the reduction of oxygen to water. Electrons originating from reduced cytochrome c in the intermembrane space (IMS) are transferred via the dinuclear copper A center (CU(A)) of subunit 2 and heme A of subunit 1 to the active site in subunit 1, a binuclear center (BNC) formed by heme A3 and copper B (CU(B)). The BNC reduces molecular oxygen to 2 water molecules using 4 electrons from cytochrome c in the IMS and 4 protons from the mitochondrial matrix. The protein is Cytochrome c oxidase subunit 2 (cox-2) of Caenorhabditis briggsae.